A 172-amino-acid chain; its full sequence is uncharacterized protein (172 aa).

This is an uncharacterized protein from Aquifex aeolicus (strain VF5).